A 252-amino-acid chain; its full sequence is MVSASLDGGLRICVRASAPEVHDKAVAWASFLKAPLNPENPEQYFFHFFVEPEGVYVRDQEKRLLEIDFDKNHLDYERKGHRGKNELIAKALGVAKGARRILDLSVGMGIDSVFLTQLGFSVIGVERSPVLYALLKEAFARTKKDSLKSYELHFADSLQFLKQNKGLLEVDAIYFDPMYPHKKKSALPKQEMVVFRDLVGHDDDASLVLQEALTWPVKRVVVKRPMQAEELLPGVRHSYEGKVVRYDTYVVG.

Residues 126-127 and D176 contribute to the S-adenosyl-L-methionine site; that span reads ER.

It belongs to the methyltransferase superfamily. RsmJ family.

Its subcellular location is the cytoplasm. It carries out the reaction guanosine(1516) in 16S rRNA + S-adenosyl-L-methionine = N(2)-methylguanosine(1516) in 16S rRNA + S-adenosyl-L-homocysteine + H(+). In terms of biological role, specifically methylates the guanosine in position 1516 of 16S rRNA. The protein is Ribosomal RNA small subunit methyltransferase J of Bdellovibrio bacteriovorus (strain ATCC 15356 / DSM 50701 / NCIMB 9529 / HD100).